We begin with the raw amino-acid sequence, 449 residues long: Probable magnetosome protein Mms48 (449 aa).

Positions 1-18 are cleaved as a signal peptide; that stretch reads MLLRLIVLLIFMSPVVFA. Residues 40–60 form a helical membrane-spanning segment; sequence SNMPVLLAVILVVFLIFSALS. Residues 323–356 form a TPR repeat; that stretch reads PDGHLAAGEAAFAVQKWGVARRHIMAALKIAPDA.

Its subcellular location is the magnetosome membrane. In terms of biological role, overexpression in wild-type cells increases the number of cells with double magnetosome chains significantly. The 4 genes of this operon collectively influence magnetosome size and number. The protein is Probable magnetosome protein Mms48 of Magnetospirillum gryphiswaldense (strain DSM 6361 / JCM 21280 / NBRC 15271 / MSR-1).